The following is a 180-amino-acid chain: Uterocalin (180 aa).

Residues 1–18 form the signal peptide; it reads MNLLLLAMGLILPRRPHA. Cysteines 82 and 175 form a disulfide. The N-linked (GlcNAc...) asparagine glycan is linked to N101.

Belongs to the calycin superfamily. Lipocalin family. As to expression, expressed in glandular and lumenal epithelia of the endometrium. Is transferred to the embryonic capsule, the conceptus and the yolk sac.

The protein localises to the secreted. Its function is as follows. Binds fatty acids and retinol. Is specialized for the preattachment embryo. May be important to maintain the pregnancy and may transport small hydrophobic ligands from mother to the developing embryo. This chain is Uterocalin, found in Equus caballus (Horse).